The sequence spans 680 residues: DNA-directed RNA polymerase subunit beta' (680 aa).

C69, C71, C87, and C90 together coordinate Zn(2+). Positions 489, 491, and 493 each coordinate Mg(2+).

The protein belongs to the RNA polymerase beta' chain family. RpoC1 subfamily. As to quaternary structure, in plastids the minimal PEP RNA polymerase catalytic core is composed of four subunits: alpha, beta, beta', and beta''. When a (nuclear-encoded) sigma factor is associated with the core the holoenzyme is formed, which can initiate transcription. Requires Mg(2+) as cofactor. It depends on Zn(2+) as a cofactor.

The protein resides in the plastid. It localises to the chloroplast. It carries out the reaction RNA(n) + a ribonucleoside 5'-triphosphate = RNA(n+1) + diphosphate. DNA-dependent RNA polymerase catalyzes the transcription of DNA into RNA using the four ribonucleoside triphosphates as substrates. This Barbarea verna (Land cress) protein is DNA-directed RNA polymerase subunit beta'.